Here is a 227-residue protein sequence, read N- to C-terminus: Ribose-5-phosphate isomerase A (227 aa).

Substrate contacts are provided by residues 26–29 (TGST), 82–85 (DGAD), and 95–98 (KGGG). E104 serves as the catalytic Proton acceptor. K122 contacts substrate.

The protein belongs to the ribose 5-phosphate isomerase family. In terms of assembly, homodimer.

It carries out the reaction aldehydo-D-ribose 5-phosphate = D-ribulose 5-phosphate. It functions in the pathway carbohydrate degradation; pentose phosphate pathway; D-ribose 5-phosphate from D-ribulose 5-phosphate (non-oxidative stage): step 1/1. Catalyzes the reversible conversion of ribose-5-phosphate to ribulose 5-phosphate. The chain is Ribose-5-phosphate isomerase A from Streptococcus pneumoniae serotype 2 (strain D39 / NCTC 7466).